We begin with the raw amino-acid sequence, 140 residues long: Lymphocyte antigen 6H (140 aa).

The N-terminal stretch at 1-25 is a signal peptide; it reads MLPAAMKGLGLALLAVLLCSAPAHG. The UPAR/Ly6 domain occupies 26 to 91; sequence LWCQDCTLTT…RHFFSDYLMG (66 aa). Intrachain disulfides connect cysteine 28-cysteine 52, cysteine 31-cysteine 40, cysteine 45-cysteine 73, cysteine 77-cysteine 104, and cysteine 105-cysteine 110. Asparagine 36 carries N-linked (GlcNAc...) asparagine glycosylation. A lipid anchor (GPI-anchor amidated glycine) is attached at glycine 115. Residues 116–140 constitute a propeptide, removed in mature form; sequence AGHSPWALAGGLLLSLGPALLWAGP.

As to quaternary structure, interacts with CHRNA4 and CHRNA7. Highly expressed in brain (cerebral cortex, amygdala, hippocampus and subthalamic nucleus) and in acute human leukemic cell line MOLT-3. Also found in lower levels in testis, pancreas, small intestine and colon.

It localises to the cell membrane. In terms of biological role, believed to act as a modulator of nicotinic acetylcholine receptors (nAChRs) activity. In vitro inhibits alpha-3:beta-4-containing nAChRs maximum response. May play a role in the intracellular trafficking of alpha-7-containing nAChRs and may inhibit their expression at the cell surface. Seems to inhibit alpha-7/CHRNA7 signaling in hippocampal neurons. In Homo sapiens (Human), this protein is Lymphocyte antigen 6H (LY6H).